The chain runs to 492 residues: Solute carrier family 2, facilitated glucose transporter member 1 (492 aa).

Met-1 bears the N-acetylmethionine mark. Topologically, residues Met-1–Arg-11 are cytoplasmic. Residues Leu-12–Ile-33 form a helical membrane-spanning segment. Topologically, residues Asn-34 to Ser-66 are extracellular. N-linked (GlcNAc...) asparagine glycosylation occurs at Asn-45. Residues Leu-67–Val-87 traverse the membrane as a helical segment. At Asn-88–Phe-90 the chain is on the cytoplasmic side. The chain crosses the membrane as a helical span at residues Gly-91–Phe-112. The Extracellular segment spans residues Ser-113–Glu-120. The chain crosses the membrane as a helical span at residues Met-121–Val-144. Residues Gly-145–Ala-155 are Cytoplasmic-facing. Residues Leu-156 to Leu-176 form a helical membrane-spanning segment. A D-glucose-binding site is contributed by Gln-161. Residues Asp-177 to Leu-185 lie on the Extracellular side of the membrane. A helical membrane pass occupies residues Trp-186–Phe-206. The Cytoplasmic portion of the chain corresponds to Cys-207–Pro-271. Ser-226 carries the phosphoserine modification. A helical membrane pass occupies residues Ile-272–Tyr-293. D-glucose-binding positions include Gln-282–Gln-283 and Asn-288. Residues Ser-294 to Pro-306 lie on the Extracellular side of the membrane. A helical transmembrane segment spans residues Val-307–Val-328. Residue Asn-317 participates in D-glucose binding. Residues Glu-329 to Arg-334 are Cytoplasmic-facing. The chain crosses the membrane as a helical span at residues Thr-335–Leu-355. Residues Ala-356–Ser-365 are Extracellular-facing. The chain crosses the membrane as a helical span at residues Tyr-366 to Trp-388. Residues Glu-380 and Trp-388 each contribute to the D-glucose site. Residues Phe-389 to Pro-401 are Cytoplasmic-facing. A helical transmembrane segment spans residues Ala-402–Phe-422. The Extracellular portion of the chain corresponds to Gln-423 to Cys-429. A helical membrane pass occupies residues Gly-430–Phe-450. Over Lys-451–Val-492 the chain is Cytoplasmic. Phosphoserine is present on Ser-465. The tract at residues Arg-468–Val-492 is disordered. Thr-478 carries the phosphothreonine modification. The residue at position 490 (Ser-490) is a Phosphoserine.

The protein belongs to the major facilitator superfamily. Sugar transporter (TC 2.A.1.1) family. Glucose transporter subfamily. In terms of assembly, found in a complex with ADD2, DMTN and SLC2A1. Interacts (via C-terminus cytoplasmic region) with DMTN isoform 2. Interacts with SNX27; the interaction is required when endocytosed to prevent degradation in lysosomes and promote recycling to the plasma membrane. Interacts with GIPC (via PDZ domain). Interacts with STOM. Interacts with SGTA (via Gln-rich region). Interacts with isoform 1 of BSG. Interacts with SMIM43; the interaction may promote SLC2A1-mediated glucose transport to meet the energy needs of mesendoderm differentiation. In terms of processing, phosphorylation at Ser-226 by PKC promotes glucose uptake by increasing cell membrane localization. In terms of tissue distribution, retina (at protein level).

The protein resides in the cell membrane. It localises to the photoreceptor inner segment. It carries out the reaction D-glucose(out) = D-glucose(in). With respect to regulation, the uptake of glucose is inhibited by cytochalasin B. Glucose uptake is increased in response to phorbol ester 12-O-tetradecanoylphorbol-13-acetate (TPA) treatment: TPA-induced glucose uptake requires phosphorylation at Ser-226. Facilitative glucose transporter, which is responsible for constitutive or basal glucose uptake. Has a very broad substrate specificity; can transport a wide range of aldoses including both pentoses and hexoses. Most important energy carrier of the brain: present at the blood-brain barrier and assures the energy-independent, facilitative transport of glucose into the brain. In association with BSG and NXNL1, promotes retinal cone survival by increasing glucose uptake into photoreceptors. Required for mesendoderm differentiation. This is Solute carrier family 2, facilitated glucose transporter member 1 from Mus musculus (Mouse).